The sequence spans 291 residues: Bis(5'-nucleosyl)-tetraphosphatase, symmetrical (291 aa).

It belongs to the Ap4A hydrolase family.

It carries out the reaction P(1),P(4)-bis(5'-adenosyl) tetraphosphate + H2O = 2 ADP + 2 H(+). Its function is as follows. Hydrolyzes diadenosine 5',5'''-P1,P4-tetraphosphate to yield ADP. The protein is Bis(5'-nucleosyl)-tetraphosphatase, symmetrical of Pseudomonas syringae pv. syringae (strain B728a).